The chain runs to 547 residues: Phosphomethylpyrimidine synthase (547 aa).

Residues Asn-146, Met-175, Tyr-204, His-240, 260–262, 301–304, and Glu-340 contribute to the substrate site; these read SRG and DGLR. His-344 serves as a coordination point for Zn(2+). A substrate-binding site is contributed by Tyr-367. His-408 lines the Zn(2+) pocket. [4Fe-4S] cluster-binding residues include Cys-488, Cys-491, and Cys-496.

It belongs to the ThiC family. [4Fe-4S] cluster serves as cofactor.

It carries out the reaction 5-amino-1-(5-phospho-beta-D-ribosyl)imidazole + S-adenosyl-L-methionine = 4-amino-2-methyl-5-(phosphooxymethyl)pyrimidine + CO + 5'-deoxyadenosine + formate + L-methionine + 3 H(+). Its pathway is cofactor biosynthesis; thiamine diphosphate biosynthesis. Its function is as follows. Catalyzes the synthesis of the hydroxymethylpyrimidine phosphate (HMP-P) moiety of thiamine from aminoimidazole ribotide (AIR) in a radical S-adenosyl-L-methionine (SAM)-dependent reaction. In Mycobacterium bovis (strain ATCC BAA-935 / AF2122/97), this protein is Phosphomethylpyrimidine synthase.